A 338-amino-acid chain; its full sequence is Glycerol-3-phosphate dehydrogenase [NAD(P)+] (338 aa).

NADPH is bound by residues Trp-11, Arg-30, and Lys-107. Residues Lys-107, Gly-140, and Ser-142 each coordinate sn-glycerol 3-phosphate. An NADPH-binding site is contributed by Ala-144. Sn-glycerol 3-phosphate-binding residues include Lys-195, Asp-248, Ser-258, Arg-259, and Asn-260. Residue Lys-195 is the Proton acceptor of the active site. Residue Arg-259 participates in NADPH binding. Residues Val-283 and Glu-285 each coordinate NADPH.

The protein belongs to the NAD-dependent glycerol-3-phosphate dehydrogenase family.

It localises to the cytoplasm. The catalysed reaction is sn-glycerol 3-phosphate + NAD(+) = dihydroxyacetone phosphate + NADH + H(+). It carries out the reaction sn-glycerol 3-phosphate + NADP(+) = dihydroxyacetone phosphate + NADPH + H(+). The protein operates within membrane lipid metabolism; glycerophospholipid metabolism. Functionally, catalyzes the reduction of the glycolytic intermediate dihydroxyacetone phosphate (DHAP) to sn-glycerol 3-phosphate (G3P), the key precursor for phospholipid synthesis. This chain is Glycerol-3-phosphate dehydrogenase [NAD(P)+], found in Ralstonia nicotianae (strain ATCC BAA-1114 / GMI1000) (Ralstonia solanacearum).